Reading from the N-terminus, the 265-residue chain is Glutamate racemase (265 aa).

Substrate is bound by residues Asp-9 to Ser-10 and Tyr-41 to Ser-42. Cys-73 serves as the catalytic Proton donor/acceptor. A substrate-binding site is contributed by Asn-74–Thr-75. The Proton donor/acceptor role is filled by Cys-184. Residue Thr-185–His-186 coordinates substrate.

The protein belongs to the aspartate/glutamate racemases family.

It carries out the reaction L-glutamate = D-glutamate. It participates in cell wall biogenesis; peptidoglycan biosynthesis. In terms of biological role, provides the (R)-glutamate required for cell wall biosynthesis. The sequence is that of Glutamate racemase from Actinobacillus pleuropneumoniae serotype 5b (strain L20).